The following is a 398-amino-acid chain: Carbamoyl phosphate synthase small chain (398 aa).

The segment at 1-199 (MTPAWATEKP…WNEGFGEQAE (199 aa)) is CPSase. L-glutamine-binding residues include Ser-54, Gly-251, and Gly-253. The Glutamine amidotransferase type-1 domain occupies 203-391 (HVVAIDYGVK…VNLIREKRGE (189 aa)). Catalysis depends on Cys-280, which acts as the Nucleophile. L-glutamine contacts are provided by Leu-281, Gln-284, Asn-322, Gly-324, and Phe-325. Residues His-364 and Glu-366 contribute to the active site.

Belongs to the CarA family. As to quaternary structure, composed of two chains; the small (or glutamine) chain promotes the hydrolysis of glutamine to ammonia, which is used by the large (or ammonia) chain to synthesize carbamoyl phosphate. Tetramer of heterodimers (alpha,beta)4.

It carries out the reaction hydrogencarbonate + L-glutamine + 2 ATP + H2O = carbamoyl phosphate + L-glutamate + 2 ADP + phosphate + 2 H(+). The enzyme catalyses L-glutamine + H2O = L-glutamate + NH4(+). The protein operates within amino-acid biosynthesis; L-arginine biosynthesis; carbamoyl phosphate from bicarbonate: step 1/1. It functions in the pathway pyrimidine metabolism; UMP biosynthesis via de novo pathway; (S)-dihydroorotate from bicarbonate: step 1/3. Small subunit of the glutamine-dependent carbamoyl phosphate synthetase (CPSase). CPSase catalyzes the formation of carbamoyl phosphate from the ammonia moiety of glutamine, carbonate, and phosphate donated by ATP, constituting the first step of 2 biosynthetic pathways, one leading to arginine and/or urea and the other to pyrimidine nucleotides. The small subunit (glutamine amidotransferase) binds and cleaves glutamine to supply the large subunit with the substrate ammonia. In Mesorhizobium japonicum (strain LMG 29417 / CECT 9101 / MAFF 303099) (Mesorhizobium loti (strain MAFF 303099)), this protein is Carbamoyl phosphate synthase small chain.